We begin with the raw amino-acid sequence, 211 residues long: Probable nicotinate-nucleotide adenylyltransferase (211 aa).

The protein belongs to the NadD family.

It catalyses the reaction nicotinate beta-D-ribonucleotide + ATP + H(+) = deamido-NAD(+) + diphosphate. It participates in cofactor biosynthesis; NAD(+) biosynthesis; deamido-NAD(+) from nicotinate D-ribonucleotide: step 1/1. In terms of biological role, catalyzes the reversible adenylation of nicotinate mononucleotide (NaMN) to nicotinic acid adenine dinucleotide (NaAD). This is Probable nicotinate-nucleotide adenylyltransferase from Desulfotalea psychrophila (strain LSv54 / DSM 12343).